Here is a 1282-residue protein sequence, read N- to C-terminus: Crescerin-like protein che-12 (1282 aa).

TOG stretches follow at residues 33 to 240 and 268 to 515; these read DFDT…EHTE and PSLV…MDSF. 8 HEAT repeats span residues 59-96, 100-137, 162-209, 261-300, 308-345, 349-386, 388-421, and 424-461; these read QKKG…TFGS, YCMC…LKPE, ELHH…FIGN, RLRF…QITP, PHLH…HLKG, AHIQ…NINP, TVGG…TISP, and FNLQ…LLNG. Residues 566 to 714 form a disordered region; that stretch reads IQQQGQAEKP…RSFDDRPAKA (149 aa). Composition is skewed to low complexity over residues 575–592 and 633–644; these read PSFS…HQAQ and SAASNPNSSTSS. The span at 702–712 shows a compositional bias: basic and acidic residues; sequence DPPRSFDDRPA. TOG regions lie at residues 800 to 1022 and 1066 to 1282; these read NMSV…ANVE and TELL…ALIR. HEAT repeat units follow at residues 838–875, 879–917, 919–953, 961–998, 1095–1132, 1177–1214, and 1219–1258; these read DNLK…NLNS, SEME…AATA, KALQ…IQGS, NALS…DPNF, ASDT…SMAK, IEPV…LAYK, and QVEV…LIGE.

The protein belongs to the Crescerin family. As to expression, detected in a subset of amphid neurons that lack wing- or finger-like ciliary extensions. Likewise, detected in phasmid neurons.

The protein localises to the cell projection. The protein resides in the cilium. It is found in the perikaryon. It localises to the dendrite. In terms of biological role, required for normal structure and function of sensory cilia on amphid neurons, especially for the formation of distal ciliary structures, but is less important for normal assembly of middle and basal ciliary structures. Plays a role in the organization of axoneme microtubule bundles in sensory cilia. Required for normal structure and function of the ASER neuron that mediates attraction to NaCl. Required for normal chemotaxis to NaCl. Required for normal avoidance response to high osmolarity. In contrast, is not required for normal chemotaxis to isoamyl alcohol. Does not play a role in intraflagella transport (IFT). Promotes dauer formation in response to pheromones such as the ascarosides ascr#2, ascr#3, ascr#5, ascr#8 and icas#9. This chain is Crescerin-like protein che-12, found in Caenorhabditis elegans.